A 325-amino-acid polypeptide reads, in one-letter code: Tryptophan--tRNA ligase (325 aa).

Residues 9–11 (QPS) and 17–18 (GN) each bind ATP. A 'HIGH' region motif is present at residues 10-18 (PSGILHIGN). Asp-132 serves as a coordination point for L-tryptophan. ATP-binding positions include 144 to 146 (GKD), Val-184, and 191 to 195 (KMSKS). Positions 191–195 (KMSKS) match the 'KMSKS' region motif.

This sequence belongs to the class-I aminoacyl-tRNA synthetase family. In terms of assembly, homodimer.

It localises to the cytoplasm. The enzyme catalyses tRNA(Trp) + L-tryptophan + ATP = L-tryptophyl-tRNA(Trp) + AMP + diphosphate + H(+). In terms of biological role, catalyzes the attachment of tryptophan to tRNA(Trp). This is Tryptophan--tRNA ligase from Fusobacterium nucleatum subsp. nucleatum (strain ATCC 25586 / DSM 15643 / BCRC 10681 / CIP 101130 / JCM 8532 / KCTC 2640 / LMG 13131 / VPI 4355).